Here is a 274-residue protein sequence, read N- to C-terminus: Carboxy-S-adenosyl-L-methionine synthase (274 aa).

S-adenosyl-L-methionine is bound by residues tyrosine 59, 93–95 (GCS), 149–150 (DI), asparagine 164, and arginine 231.

The protein belongs to the class I-like SAM-binding methyltransferase superfamily. Cx-SAM synthase family. Homodimer.

It catalyses the reaction prephenate + S-adenosyl-L-methionine = carboxy-S-adenosyl-L-methionine + 3-phenylpyruvate + H2O. Its function is as follows. Catalyzes the conversion of S-adenosyl-L-methionine (SAM) to carboxy-S-adenosyl-L-methionine (Cx-SAM). This chain is Carboxy-S-adenosyl-L-methionine synthase, found in Psychrobacter sp. (strain PRwf-1).